The primary structure comprises 558 residues: MSLSKEVKSFQWTQALRRELQSFTSDVKAAVIKDATNLLNGLDFSEVSNVQRIMRKEKRDDKDLQRLRSLNQTVHSLVDLKSTSKKNVLKVGRLSAEELMSLAADLEKLKAKIMRSERPQASGVYMGNLTTQQLDQRSQILQIVGMRKPQQGASGVVRVWDVKDSSLLNNQFGTMPSLTMACMAKQSQTPLNDVVQALTDLGLLYTVKYPNLNDLERLKDKHPVLGVITEQQSSINISGYNFSLGAAVKAGAALLDGGNMLESILIKPSNSEDLLKAVLGAKRKLNMFVSDQVGDRNPYENILYKVCLSGEGWPYIACRTSIVGRAWENTTIDLTSEKPAVNSPRPAPGAAGPPQVGLSYSQTMLLKDLMGGIDPNAPTWIDIEGRFNDPVEIAIFQPQNGQFIHFYREPVDQKQFKQDSKYSHGMDLADLFNAQPGLTSSVIGALPQGMVLSCQGSDDIRKLLDSQNRKDIKLIDVEMTREASREYEDKVWDKYGWLCKMHTGIVRDKKKKEITPHCALMDCIIFESASKARLPDLKTVHNILPHDLIFRGPNVVTL.

Residues 54 to 237 (MRKEKRDDKD…ITEQQSSINI (184 aa)) are binding site for the cap structure m7GTP. The Mg(2+) site is built by Asp-382 and Glu-384. Mn(2+) is bound by residues Asp-382 and Glu-384. 4 residues coordinate Zn(2+): Glu-392, Cys-499, His-502, and Cys-518. Asp-522 provides a ligand contact to Mg(2+). Mn(2+) is bound at residue Asp-522.

This sequence belongs to the arenaviridae nucleocapsid protein family. In terms of assembly, homomultimerizes to form the nucleocapsid. Binds to viral genomic RNA. Interacts with glycoprotein G2. Interacts with protein Z; this interaction probably directs the encapsidated genome to budding sites. Interacts with protein L; this interaction does not interfere with Z-L interaction. Interacts with host IKBKE (via Protein kinase domain); the interaction inhibits IKBKE kinase activity.

The protein resides in the virion. Its subcellular location is the host cytoplasm. Its function is as follows. Encapsidates the genome, protecting it from nucleases. The encapsidated genomic RNA is termed the nucleocapsid (NC). Serves as template for viral transcription and replication. The increased presence of protein N in host cell does not seem to trigger the switch from transcription to replication as observed in other negative strain RNA viruses. Through the interaction with host IKBKE, strongly inhibits the phosphorylation and nuclear translocation of host IRF3, a protein involved in interferon activation pathway, leading to the inhibition of interferon-beta and IRF3-dependent promoters activation. Also encodes a functional 3'-5' exoribonuclease that degrades preferentially dsRNA substrates and thereby participates in the suppression of interferon induction. In Lymphocytic choriomeningitis virus (strain Armstrong) (LCMV), this protein is Nucleoprotein.